A 529-amino-acid chain; its full sequence is Retinoic acid-induced protein 2 (529 aa).

Disordered regions lie at residues methionine 1–alanine 21 and serine 400–serine 419. Residues glycine 407 to histidine 416 show a composition bias toward polar residues.

This Mus musculus (Mouse) protein is Retinoic acid-induced protein 2 (Rai2).